A 534-amino-acid chain; its full sequence is Bifunctional purine biosynthesis protein PurH (534 aa).

In terms of domain architecture, MGS-like spans 6–151; it reads TRLPVRRALI…KNHKDVAIVV (146 aa).

This sequence belongs to the PurH family.

The catalysed reaction is (6R)-10-formyltetrahydrofolate + 5-amino-1-(5-phospho-beta-D-ribosyl)imidazole-4-carboxamide = 5-formamido-1-(5-phospho-D-ribosyl)imidazole-4-carboxamide + (6S)-5,6,7,8-tetrahydrofolate. The enzyme catalyses IMP + H2O = 5-formamido-1-(5-phospho-D-ribosyl)imidazole-4-carboxamide. It participates in purine metabolism; IMP biosynthesis via de novo pathway; 5-formamido-1-(5-phospho-D-ribosyl)imidazole-4-carboxamide from 5-amino-1-(5-phospho-D-ribosyl)imidazole-4-carboxamide (10-formyl THF route): step 1/1. Its pathway is purine metabolism; IMP biosynthesis via de novo pathway; IMP from 5-formamido-1-(5-phospho-D-ribosyl)imidazole-4-carboxamide: step 1/1. The sequence is that of Bifunctional purine biosynthesis protein PurH from Stutzerimonas stutzeri (strain A1501) (Pseudomonas stutzeri).